The primary structure comprises 396 residues: Elongation factor Tu (396 aa).

The region spanning 10–206 (KEHVNIGTIG…AVDTWIETPV (197 aa)) is the tr-type G domain. A G1 region spans residues 19-26 (GHVDHGKT). 19–26 (GHVDHGKT) provides a ligand contact to GTP. T26 is a Mg(2+) binding site. Residues 60 to 64 (GITIN) are G2. The tract at residues 81–84 (DCPG) is G3. GTP contacts are provided by residues 81-85 (DCPGH) and 136-139 (NKCD). The G4 stretch occupies residues 136 to 139 (NKCD). The tract at residues 176-178 (SAL) is G5.

This sequence belongs to the TRAFAC class translation factor GTPase superfamily. Classic translation factor GTPase family. EF-Tu/EF-1A subfamily. As to quaternary structure, monomer.

The protein localises to the cytoplasm. The enzyme catalyses GTP + H2O = GDP + phosphate + H(+). Functionally, GTP hydrolase that promotes the GTP-dependent binding of aminoacyl-tRNA to the A-site of ribosomes during protein biosynthesis. The polypeptide is Elongation factor Tu (Mycoplasmopsis agalactiae (strain NCTC 10123 / CIP 59.7 / PG2) (Mycoplasma agalactiae)).